Consider the following 634-residue polypeptide: MKAVLLLLYALGIAAAVPTTFLSDHSNPTSATLPTLEDATVPTVPAEAAADIEKHPNHKAEKPSALNSEEEAHEQSTEQDKTYSFEVDLKDEEDGDGDLSVDPTERTLDLQEGTSEPQQKRLPENADFPATVSTPFVDSDQPANITKGEESQEQPVSDSHQQQDESGKQTQDSMTEESHKQDPGIPNEEKEEEEDPEDVGAPSDNQEEEKEPPEEQPTSKWEGNGDQSEDILQESSQPTQISKTKNDFEQGSQGQEGDSNAEGEDKAAGSKEHLPHTEWQGQEGRAGLDAIGNRKDTDEEKAVSTEPTDAAVVPRNHGASDNGGGDDSKHGASDDYFIPSQEFLEAERMHSLSYYLKYGEETPDESENRSEAGDNQGAKKAESSPNAEPSDEGNSRGHSADSCMNFQCKRGHTCKTDQHGKPHCVCQDPETCPPAKILDQACGTDNQTYASSCHLFATKCMLEGTKKGHQLQLDYFGACKSIPACTDFEVAQFPLRMRDWLKNILMQLYEPNPKHGGYLNEKQRSKVKKIYLDEKRLLAGDHPIELLLRDFKKNYHMYVYPVHWQFNELDQHPADRILTHSELAPLRASLVPMEHCITRFFEECDPNKDKHITLKEWGHCFGIKEEDIDENLLF.

Positions 1–16 (MKAVLLLLYALGIAAA) are cleaved as a signal peptide. Residues 50 to 335 (ADIEKHPNHK…DDSKHGASDD (286 aa)) form a disordered region. Basic and acidic residues predominate over residues 51–62 (DIEKHPNHKAEK). S68, S76, and S84 each carry phosphoserine. Basic and acidic residues predominate over residues 73–83 (HEQSTEQDKTY). The span at 89 to 99 (LKDEEDGDGDL) shows a compositional bias: acidic residues. Positions 131–144 (TVSTPFVDSDQPAN) are enriched in polar residues. N-linked (GlcNAc...) asparagine glycosylation is present at N144. A phosphoserine mark is found at S151 and S159. 2 stretches are compositionally biased toward acidic residues: residues 189–198 (EKEEEEDPED) and 205–214 (NQEEEKEPPE). The span at 233 to 258 (QESSQPTQISKTKNDFEQGSQGQEGD) shows a compositional bias: polar residues. Phosphoserine is present on S259. 2 stretches are compositionally biased toward basic and acidic residues: residues 263-276 (GEDK…HLPH) and 292-303 (GNRKDTDEEKAV). A phosphoserine mark is found at S333 and S340. Positions 360–398 (EETPDESENRSEAGDNQGAKKAESSPNAEPSDEGNSRGH) are disordered. Residues 366–382 (SENRSEAGDNQGAKKAE) show a composition bias toward basic and acidic residues. An N-linked (GlcNAc...) asparagine glycan is attached at N368. Residues S370 and S390 each carry the phosphoserine modification. The Follistatin-like domain occupies 402–424 (SCMNFQCKRGHTCKTDQHGKPHC). 7 disulfide bridges follow: C403-C414, C408-C424, C426-C460, C432-C453, C442-C479, C485-C596, and C604-C620. The Kazal-like domain occupies 420 to 481 (GKPHCVCQDP…QLDYFGACKS (62 aa)). N446 carries N-linked (GlcNAc...) asparagine glycosylation. The region spanning 592-627 (PMEHCITRFFEECDPNKDKHITLKEWGHCFGIKEED) is the EF-hand domain. Ca(2+) is bound by residues D605, N607, D609, H611, and E616.

It belongs to the SPARC family. Expressed in many types of neurons in the brain.

It is found in the secreted. The protein resides in the extracellular space. Its subcellular location is the extracellular matrix. The protein is SPARC-like protein 1 (Sparcl1) of Rattus norvegicus (Rat).